A 431-amino-acid polypeptide reads, in one-letter code: Guanine nucleotide exchange factor rei-2 (431 aa).

The segment covering 1–21 (MDETATSSEVTETFVSDPTTR) has biased composition (polar residues). The disordered stretch occupies residues 1-28 (MDETATSSEVTETFVSDPTTRQFEEDGH). Coiled-coil stretches lie at residues 149–171 (EVLN…AESL) and 214–247 (LEAQ…RISE). Residues 249–298 (IHEERSTGSLESAVSSDQEDQKSDFKSSESLPGNPPPYAPTAPPPYEDKY) are disordered. Over residues 255–264 (TGSLESAVSS) the composition is skewed to polar residues. Positions 281–293 (GNPPPYAPTAPPP) are enriched in pro residues.

It belongs to the SH3BP5 family. Interacts with rab-11.1. Binds preferentially to the GDP-bound form of rab-11.1.

Its function is as follows. Guanine nucleotide exchange factor for Rab GTPase Rab-11.1. May spatially and temporally regulate the distribution of Rab-11.1 to target membranes during embryogenesis. May play a role in cytokinesis, probably by targeting rab-11.1 to the cleavage furrows. The protein is Guanine nucleotide exchange factor rei-2 of Caenorhabditis elegans.